The chain runs to 188 residues: MGNTKLANPAPLGLMGFGMTTILLNLHNVGYFALDGIILAMGIFYGGIAQIFAGLLEYKKGNTFGLTAFTSYGSFWLTLVAILLMPKLGLTDAPNAQFLGVYLGLWGVFTLFMFFGTLKGARVLQFVFFSLTVLFALLAIGNIAGNAAIIHFAGWIGLICGASAIYLAMGEVLNEQFGRTVLPIGESH.

At 1-13 the chain is on the cytoplasmic side; that stretch reads MGNTKLANPAPLG. A helical membrane pass occupies residues 14 to 34; that stretch reads LMGFGMTTILLNLHNVGYFAL. Residue Asp35 is a topological domain, periplasmic. The helical transmembrane segment at 36 to 56 threads the bilayer; it reads GIILAMGIFYGGIAQIFAGLL. Residues 57–63 are Cytoplasmic-facing; sequence EYKKGNT. The chain crosses the membrane as a helical span at residues 64–84; the sequence is FGLTAFTSYGSFWLTLVAILL. The Periplasmic segment spans residues 85–97; the sequence is MPKLGLTDAPNAQ. The helical transmembrane segment at 98-118 threads the bilayer; the sequence is FLGVYLGLWGVFTLFMFFGTL. The Cytoplasmic segment spans residues 119-122; sequence KGAR. Residues 123–143 form a helical membrane-spanning segment; it reads VLQFVFFSLTVLFALLAIGNI. Over 144–148 the chain is Periplasmic; sequence AGNAA. Residues 149 to 169 traverse the membrane as a helical segment; that stretch reads IIHFAGWIGLICGASAIYLAM. The Cytoplasmic segment spans residues 170 to 188; sequence GEVLNEQFGRTVLPIGESH.

It belongs to the acetate uptake transporter (AceTr) (TC 2.A.96) family.

The protein localises to the cell inner membrane. Its function is as follows. Uptake of acetate and succinate. Transport is energetically dependent on the protonmotive force. In Escherichia coli O157:H7, this protein is Succinate-acetate/proton symporter SatP (satP).